Consider the following 316-residue polypeptide: 4-diphosphocytidyl-2-C-methyl-D-erythritol kinase (316 aa).

The active site involves Lys11. An ATP-binding site is contributed by 99-109; it reads PVAAGLAGGST. The active site involves Asp141.

The protein belongs to the GHMP kinase family. IspE subfamily.

The catalysed reaction is 4-CDP-2-C-methyl-D-erythritol + ATP = 4-CDP-2-C-methyl-D-erythritol 2-phosphate + ADP + H(+). It participates in isoprenoid biosynthesis; isopentenyl diphosphate biosynthesis via DXP pathway; isopentenyl diphosphate from 1-deoxy-D-xylulose 5-phosphate: step 3/6. In terms of biological role, catalyzes the phosphorylation of the position 2 hydroxy group of 4-diphosphocytidyl-2C-methyl-D-erythritol. This Gloeothece citriformis (strain PCC 7424) (Cyanothece sp. (strain PCC 7424)) protein is 4-diphosphocytidyl-2-C-methyl-D-erythritol kinase.